Here is a 185-residue protein sequence, read N- to C-terminus: Ribonuclease M5 (185 aa).

The Toprim domain maps to 4-87 (KEIIVVEGKD…AFLPKEEALA (84 aa)). The Mg(2+) site is built by E10, D56, and D58.

It belongs to the ribonuclease M5 family. It depends on Mg(2+) as a cofactor.

The protein localises to the cytoplasm. The catalysed reaction is Endonucleolytic cleavage of RNA, removing 21 and 42 nucleotides, respectively, from the 5'- and 3'-termini of a 5S-rRNA precursor.. Its function is as follows. Required for correct processing of both the 5' and 3' ends of 5S rRNA precursor. Cleaves both sides of a double-stranded region yielding mature 5S rRNA in one step. This chain is Ribonuclease M5, found in Bacillus anthracis.